The primary structure comprises 369 residues: Ribonuclease 3 (369 aa).

Positions 6-142 (IGFVQSSINY…IIGAVAADCD (137 aa)) constitute an RNase III domain. Glu46 contributes to the Mg(2+) binding site. The active site involves Asp50. Mg(2+) contacts are provided by Asp128 and Glu131. The active site involves Glu131. The DRBM domain maps to 272-341 (NPASTLHELF…SLKLLKFIAK (70 aa)).

The protein belongs to the ribonuclease III family. As to quaternary structure, homodimer. It depends on Mg(2+) as a cofactor.

The protein resides in the cytoplasm. The enzyme catalyses Endonucleolytic cleavage to 5'-phosphomonoester.. Functionally, digests double-stranded RNA. Involved in the processing of primary rRNA transcript to yield the immediate precursors to the large and small rRNAs (23S and 16S). Processes some mRNAs, and tRNAs when they are encoded in the rRNA operon. Processes pre-crRNA and tracrRNA of type II CRISPR loci if present in the organism. In Treponema succinifaciens (strain ATCC 33096 / DSM 2489 / 6091), this protein is Ribonuclease 3 (rnc).